The sequence spans 742 residues: Collectin-12 (742 aa).

The Cytoplasmic segment spans residues 1-37 (MKDDFAEEEEVQSFGYKRFGIQEGTQCTKCKNNWALK). The chain crosses the membrane as a helical; Signal-anchor for type II membrane protein span at residues 38 to 58 (FSIILLYVLCALLTITVAILG). Over 59–742 (YKVVEKMDTV…EREAVPSSIL (684 aa)) the chain is Extracellular. The stretch at 104-142 (TNSELSTFRSDILDLRQQLQEITEKTSKNKDMLEKLQAN) forms a coiled coil. Residues Asn-159, Asn-168, and Asn-271 are each glycosylated (N-linked (GlcNAc...) asparagine). Positions 220–301 (ITNLQRSVDD…SFTGQMDNIT (82 aa)) form a coiled coil. The segment at 439–608 (TILQGPPGPR…TPASEVNGCP (170 aa)) is disordered. 2 Collagen-like domains span residues 452 to 511 (GDRG…KGSR) and 527 to 586 (GPPG…PGPS). Residues 501 to 514 (SKGSQGPKGSRGSP) show a composition bias toward low complexity. The segment covering 516 to 532 (KPGPQGPSGDPGPPGPP) has biased composition (pro residues). A compositionally biased stretch (low complexity) spans 534-556 (KDGLPGPQGPPGFQGLQGTVGEP). Residues 571 to 585 (PGMPGPKGPPGPPGP) show a composition bias toward pro residues. Cystine bridges form between Cys-607/Cys-618, Cys-635/Cys-730, and Cys-708/Cys-722. Residues 614–731 (FTDKCYYFSV…CDEINNFICE (118 aa)) form the C-type lectin domain. Positions 644, 646, 650, 670, and 674 each coordinate Ca(2+). A carbohydrate contacts are provided by Lys-691, Gln-694, and Asp-696. The Ca(2+) site is built by Gln-694, Asp-696, Asn-697, Glu-706, Asp-707, Asn-718, Asp-719, and Glu-731. Glu-706 serves as a coordination point for a carbohydrate. A carbohydrate-binding residues include Asn-718 and Asp-719.

The extracellular domain forms a stable trimer. The extracellular domain interacts with fibrillar amyloid-beta peptide. In terms of tissue distribution, highly expressed in lung, spleen, small and large intestine, stomach and brain. Expressed in neonatal microglia.

It localises to the membrane. Scavenger receptor that displays several functions associated with host defense. Promotes binding and phagocytosis of Gram-positive, Gram-negative bacteria and yeast. Mediates the recognition, internalization and degradation of oxidatively modified low density lipoprotein (oxLDL) by vascular endothelial cells. Binds to several carbohydrates including Gal-type ligands, D-galactose, L- and D-fucose, GalNAc, T and Tn antigens in a calcium-dependent manner and internalizes specifically GalNAc in nurse-like cells. Also binds to sialyl Lewis X or a trisaccharide and asialo-orosomucoid (ASOR). This Rattus norvegicus (Rat) protein is Collectin-12 (Colec12).